Consider the following 439-residue polypeptide: Protein dumpy-20 (439 aa).

The interval 93–116 is disordered; it reads GTLSDPSLHGSNSSSSTSDVGSSV. Positions 96-116 are enriched in low complexity; it reads SDPSLHGSNSSSSTSDVGSSV. BED-type zinc fingers lie at residues 135-184 and 349-398; these read PTEN…YQKV and KTEH…YNDV. The Zn(2+) site is built by Cys154, Cys157, His172, His177, Cys368, Cys371, His386, and His391.

Its function is as follows. Involved in cuticle function and is essential for normal morphological development. In Caenorhabditis briggsae, this protein is Protein dumpy-20 (dpy-20).